The primary structure comprises 321 residues: Solute carrier family 25 member 33 (321 aa).

Solcar repeat units lie at residues 9–118 (ENTL…AKEQ), 126–213 (NSNI…LKKY), and 231–315 (TNFF…IVYL). Helical transmembrane passes span 12 to 32 (LLHL…TCPL), 49 to 65 (VYYP…AGVV), 121 to 141 (GVFV…AAFV), 190 to 210 (LTAS…YESL), 233 to 253 (FFGL…VAYP), and 298 to 318 (QIPN…LLED).

The protein belongs to the mitochondrial carrier (TC 2.A.29) family.

It is found in the mitochondrion inner membrane. The enzyme catalyses UTP(in) + UDP(out) = UTP(out) + UDP(in). It catalyses the reaction dUTP(out) + UTP(in) = dUTP(in) + UTP(out). It carries out the reaction 5-methyl-UTP(out) + UTP(in) = 5-methyl-UTP(in) + UTP(out). The catalysed reaction is 5-methyl-UDP(out) + UTP(in) = 5-methyl-UDP(in) + UTP(out). The enzyme catalyses UTP(in) + CTP(out) = UTP(out) + CTP(in). It catalyses the reaction CDP(out) + UTP(in) = CDP(in) + UTP(out). It carries out the reaction dCTP(out) + UTP(in) = dCTP(in) + UTP(out). The catalysed reaction is dCDP(out) + UTP(in) = dCDP(in) + UTP(out). The enzyme catalyses UTP(in) + GTP(out) = UTP(out) + GTP(in). It catalyses the reaction UTP(in) + GDP(out) = UTP(out) + GDP(in). It carries out the reaction dGTP(out) + UTP(in) = dGTP(in) + UTP(out). The catalysed reaction is dGDP(out) + UTP(in) = dGDP(in) + UTP(out). The enzyme catalyses ITP(out) + UTP(in) = ITP(in) + UTP(out). In terms of biological role, mitochondrial transporter that imports/exports pyrimidine nucleotides into and from mitochondria. Selectively transports uridine, thymidine, guanosine, cytosine and inosine (deoxy)nucleoside di- and triphosphates by an antiport mechanism. May import (deoxy)nucleoside triphosphates in exchange for intramitochondrial (deoxy)nucleoside diphosphates, thus providing precursors necessary for de novo synthesis of mitochondrial DNA and RNA while exporting products of their catabolism. Participates in mitochondrial genome maintenance, regulation of mitochondrial membrane potential and mitochondrial respiration. Upon INS or IGF1 stimulation regulates cell growth and proliferation by controlling mitochondrial DNA replication and transcription, the ratio of mitochondria-to nuclear-encoded components of the electron transport chain resulting in control of mitochondrial ROS production. Participates in dendritic cell endocytosis and may associate with mitochondrial oxidative phosphorylation. The sequence is that of Solute carrier family 25 member 33 (SLC25A33) from Bos taurus (Bovine).